Consider the following 413-residue polypeptide: Serine hydroxymethyltransferase (413 aa).

Residues leucine 117 and 121–123 (GHL) contribute to the (6S)-5,6,7,8-tetrahydrofolate site. Lysine 226 is modified (N6-(pyridoxal phosphate)lysine). 349–351 (SPF) is a binding site for (6S)-5,6,7,8-tetrahydrofolate.

The protein belongs to the SHMT family. Homodimer. Requires pyridoxal 5'-phosphate as cofactor.

The protein resides in the cytoplasm. It carries out the reaction (6R)-5,10-methylene-5,6,7,8-tetrahydrofolate + glycine + H2O = (6S)-5,6,7,8-tetrahydrofolate + L-serine. The protein operates within one-carbon metabolism; tetrahydrofolate interconversion. It participates in amino-acid biosynthesis; glycine biosynthesis; glycine from L-serine: step 1/1. Catalyzes the reversible interconversion of serine and glycine with tetrahydrofolate (THF) serving as the one-carbon carrier. This reaction serves as the major source of one-carbon groups required for the biosynthesis of purines, thymidylate, methionine, and other important biomolecules. Also exhibits THF-independent aldolase activity toward beta-hydroxyamino acids, producing glycine and aldehydes, via a retro-aldol mechanism. The polypeptide is Serine hydroxymethyltransferase (Listeria innocua serovar 6a (strain ATCC BAA-680 / CLIP 11262)).